A 588-amino-acid polypeptide reads, in one-letter code: Histone deacetylase 9 (588 aa).

At S22 the chain carries Phosphoserine. The interaction with CTBP1 stretch occupies residues 23–27 (PLDLR). Residues 110-147 (RQEQEVERHRREQQLPPLRGKDRGRERAVASTEVKQKL) show a composition bias toward basic and acidic residues. Disordered regions lie at residues 110 to 170 (RQEQ…HSVG), 183 to 242 (TSLD…SSPL), and 264 to 301 (SSVS…PHPE). The interval 136–154 (RAVASTEVKQKLQEFLLSK) is interaction with MEF2. Polar residues-rich tracts occupy residues 154-166 (KSAT…NGKN) and 185-199 (LDQS…SPSY). The tract at residues 175–343 (LWYTAAHHTS…LPAVPSPLNA (169 aa)) is interaction with MAPK10. Over residues 208–219 (DSKDDFPLRKTA) the composition is skewed to basic and acidic residues. The interval 218–261 (TASEPNLKVRSRLKQKVAERRSSPLLRRKDGNLVTSFKKRVFEV) is interaction with ETV6. S220 carries the post-translational modification Phosphoserine. Residues 233–242 (KVAERRSSPL) are compositionally biased toward basic and acidic residues. At S240 the chain carries Phosphoserine; by DYRK1B. A compositionally biased stretch (low complexity) spans 264–284 (SSVSSSSPGSGPSSPNNGPAG). A Phosphoserine modification is found at S450. A disordered region spans residues 493-533 (QLKQPGSHLEEAEEELQGDQSMEDRAASKDNSARSDSSACV). The span at 514–525 (MEDRAASKDNSA) shows a compositional bias: basic and acidic residues. S552 bears the Phosphoserine mark.

This sequence belongs to the histone deacetylase family. HD type 2 subfamily. In terms of assembly, homodimer. Interacts with ETV6. Interacts with MEF2, HDAC1, HDAC3, HDAC4, HDAC5, CTBP1 and MAPK10. The phosphorylated form interacts with 14-3-3. Interacts with FOXP3 in the absence of T-cell stimulation. Post-translationally, sumoylated. Phosphorylated on Ser-220 and Ser-450; which promotes 14-3-3-binding, impairs interaction with MEF2, and antagonizes antimyogenic activity. Phosphorylated on Ser-240 by DYRK1B; which impairs nuclear accumulation. Phosphorylated by the PKC kinases PKN1 and PKN2, impairing nuclear import. In terms of tissue distribution, expressed at high levels in heart, brain and spleen. Expressed in skeletal muscle.

It is found in the nucleus. It carries out the reaction N(6)-acetyl-L-lysyl-[histone] + H2O = L-lysyl-[histone] + acetate. Its function is as follows. Devoided of intrinsic deacetylase activity, promotes the deacetylation of lysine residues on the N-terminal part of the core histones (H2A, H2B, H3 and H4) by recruiting HDAC1 and HDAC3. Histone deacetylation gives a tag for epigenetic repression and plays an important role in transcriptional regulation, cell cycle progression and developmental events. Represses MEF2-dependent transcription, inhibits skeletal myogenesis and may be involved in heart development. Protects neurons from apoptosis, both by inhibiting JUN phosphorylation by MAPK10 and by repressing JUN transcription via HDAC1 recruitment to JUN promoter. This chain is Histone deacetylase 9 (Hdac9), found in Mus musculus (Mouse).